The sequence spans 348 residues: Putative transport protein HI_0338 (348 aa).

9 consecutive transmembrane segments (helical) span residues 7 to 27 (LHRT…VKLA), 28 to 48 (AEIV…SPII), 60 to 80 (LAIT…VGLI), 139 to 159 (VLLN…VVIF), 196 to 216 (VIGY…GVFI), 223 to 243 (VQYA…PNIG), 245 to 265 (IIAA…GIGF), 267 to 287 (VAIG…PKMM), and 296 to 316 (LVVF…GMLL).

This sequence belongs to the autoinducer-2 exporter (AI-2E) (TC 2.A.86) family.

It localises to the cell membrane. The protein is Putative transport protein HI_0338 of Haemophilus influenzae (strain ATCC 51907 / DSM 11121 / KW20 / Rd).